The chain runs to 779 residues: Ribonucleoside-diphosphate reductase large subunit (779 aa).

Substrate is bound by residues serine 178, 193–194, glycine 222, 420–424, and 614–618; these read SC, NLCIE, and PTATS. The cysteines at positions 194 and 440 are disulfide-linked. Asparagine 420 (proton acceptor) is an active-site residue. Cysteine 422 (cysteine radical intermediate) is an active-site residue. The active-site Proton acceptor is the glutamate 424.

This sequence belongs to the ribonucleoside diphosphate reductase large chain family. Heterotetramer composed of a homodimer of the large subunit (R1) and a homodimer of the small subunit (R2). Larger multisubunit protein complex are also active, composed of (R1)n(R2)n.

It carries out the reaction a 2'-deoxyribonucleoside 5'-diphosphate + [thioredoxin]-disulfide + H2O = a ribonucleoside 5'-diphosphate + [thioredoxin]-dithiol. With respect to regulation, under complex allosteric control mediated by deoxynucleoside triphosphates and ATP binding. The type of nucleotide bound at the specificity site determines substrate preference. It seems probable that ATP makes the enzyme reduce CDP and UDP, dGTP favors ADP reduction and dTTP favors GDP reduction. Its function is as follows. Ribonucleoside-diphosphate reductase holoenzyme provides the precursors necessary for viral DNA synthesis. Allows virus growth in non-dividing cells. Catalyzes the biosynthesis of deoxyribonucleotides from the corresponding ribonucleotides. The chain is Ribonucleoside-diphosphate reductase large subunit from African swine fever virus (isolate Tick/Malawi/Lil 20-1/1983) (ASFV).